The chain runs to 602 residues: Glutamyl-tRNA(Gln) amidotransferase subunit B, mitochondrial (602 aa).

The transit peptide at 1 to 56 directs the protein to the mitochondrion; sequence MFRSCLRHCRRATVRSRTCPRCSHHEIPQLQVVQRQISLSSSFPHIRRLQTSSTDT.

The protein belongs to the GatB/GatE family. GatB subfamily. In terms of assembly, subunit of the heterotrimeric GatCAB amidotransferase (AdT) complex, composed of A, B and C subunits.

It is found in the mitochondrion. The catalysed reaction is L-glutamyl-tRNA(Gln) + L-glutamine + ATP + H2O = L-glutaminyl-tRNA(Gln) + L-glutamate + ADP + phosphate + H(+). Allows the formation of correctly charged Gln-tRNA(Gln) through the transamidation of misacylated Glu-tRNA(Gln) in the mitochondria. The reaction takes place in the presence of glutamine and ATP through an activated gamma-phospho-Glu-tRNA(Gln). The chain is Glutamyl-tRNA(Gln) amidotransferase subunit B, mitochondrial (nempA) from Emericella nidulans (strain FGSC A4 / ATCC 38163 / CBS 112.46 / NRRL 194 / M139) (Aspergillus nidulans).